Reading from the N-terminus, the 390-residue chain is ATP-sensitive inward rectifier potassium channel 11 (390 aa).

Residues M1–D65 lie on the Cytoplasmic side of the membrane. Positions 48 and 50 each coordinate ATP. A helical transmembrane segment spans residues L66–L92. Topologically, residues I93–S116 are extracellular. A disulfide bridge connects residues C110 and C142. The segment at residues F117 to F133 is an intramembrane region (discontinuously helical; Pore-forming). Residues T130 and F133 each contribute to the K(+) site. The short motif at T130–G135 is the Selectivity filter element. Over G134–C142 the chain is Extracellular. Residues P143–T171 form a helical membrane-spanning segment. The Cytoplasmic portion of the chain corresponds to A172–S390. R176 is a binding site for a 1,2-diacyl-sn-glycero-3-phospho-(1D-myo-inositol-4,5-bisphosphate). Residue Y330 coordinates ATP. T341 carries the post-translational modification Phosphothreonine; by MAPK1. S385 carries the phosphoserine; by MAPK1 modification.

This sequence belongs to the inward rectifier-type potassium channel (TC 1.A.2.1) family. KCNJ11 subfamily. As to quaternary structure, homotetramer; the homotetramer binds four ATP molecules (one ATP per subunit). Forms an heterooctamer with ABCC8/SUR1; one KCNJ11 homotetramer interacts with four ABCC8/SUR1 molecules. Interacts with ABCC9/SUR2. Post-translationally, phosphorylation by MAPK1 results in changes in channel gating that destabilize the closed states and reduce the ATP sensitivity.

The protein resides in the membrane. The catalysed reaction is K(+)(in) = K(+)(out). With respect to regulation, KATP channels are regulated by cytoplasmic ATP/ADP ratios; ATP inhibits the channel by closing the pore, while ADP activates the channel. Activated by phosphatidylinositol 4,5-biphosphate (PtdIns(4,5)P2). Inward rectifier potassium channel that forms the pore of ATP-sensitive potassium channels (KATP), regulating potassium permeability as a function of cytoplasmic ATP and ADP concentrations in many different cells. Inward rectifier potassium channels are characterized by a greater tendency to allow potassium to flow into the cell rather than out of it. Their voltage dependence is regulated by the concentration of extracellular potassium; as external potassium is raised, the voltage range of the channel opening shifts to more positive voltages. The inward rectification is mainly due to the blockage of outward current by internal magnesium. Can be blocked by extracellular barium. In pancreatic cells, it forms KATP channels with ABCC8/SUR1. Can form cardiac and smooth muscle-type KATP channels with ABCC9. In Oryctolagus cuniculus (Rabbit), this protein is ATP-sensitive inward rectifier potassium channel 11 (KCNJ11).